Reading from the N-terminus, the 86-residue chain is Small ribosomal subunit protein bS20 (86 aa).

Belongs to the bacterial ribosomal protein bS20 family.

In terms of biological role, binds directly to 16S ribosomal RNA. The polypeptide is Small ribosomal subunit protein bS20 (Bifidobacterium longum subsp. infantis (strain ATCC 15697 / DSM 20088 / JCM 1222 / NCTC 11817 / S12)).